Reading from the N-terminus, the 183-residue chain is Adenylate kinase (183 aa).

7-15 (GVAGVGKTT) provides a ligand contact to ATP.

It belongs to the archaeal adenylate kinase family.

Its subcellular location is the cytoplasm. The enzyme catalyses AMP + ATP = 2 ADP. The sequence is that of Adenylate kinase (adkA) from Thermoplasma acidophilum (strain ATCC 25905 / DSM 1728 / JCM 9062 / NBRC 15155 / AMRC-C165).